The primary structure comprises 289 residues: Phosphatidylserine decarboxylase proenzyme (289 aa).

Residues D89, H146, and S252 each act as charge relay system; for autoendoproteolytic cleavage activity in the active site. S252 (schiff-base intermediate with substrate; via pyruvic acid; for decarboxylase activity) is an active-site residue. A Pyruvic acid (Ser); by autocatalysis modification is found at S252.

It belongs to the phosphatidylserine decarboxylase family. PSD-B subfamily. Prokaryotic type I sub-subfamily. Heterodimer of a large membrane-associated beta subunit and a small pyruvoyl-containing alpha subunit. It depends on pyruvate as a cofactor. Post-translationally, is synthesized initially as an inactive proenzyme. Formation of the active enzyme involves a self-maturation process in which the active site pyruvoyl group is generated from an internal serine residue via an autocatalytic post-translational modification. Two non-identical subunits are generated from the proenzyme in this reaction, and the pyruvate is formed at the N-terminus of the alpha chain, which is derived from the carboxyl end of the proenzyme. The autoendoproteolytic cleavage occurs by a canonical serine protease mechanism, in which the side chain hydroxyl group of the serine supplies its oxygen atom to form the C-terminus of the beta chain, while the remainder of the serine residue undergoes an oxidative deamination to produce ammonia and the pyruvoyl prosthetic group on the alpha chain. During this reaction, the Ser that is part of the protease active site of the proenzyme becomes the pyruvoyl prosthetic group, which constitutes an essential element of the active site of the mature decarboxylase.

It localises to the cell membrane. It catalyses the reaction a 1,2-diacyl-sn-glycero-3-phospho-L-serine + H(+) = a 1,2-diacyl-sn-glycero-3-phosphoethanolamine + CO2. It functions in the pathway phospholipid metabolism; phosphatidylethanolamine biosynthesis; phosphatidylethanolamine from CDP-diacylglycerol: step 2/2. Functionally, catalyzes the formation of phosphatidylethanolamine (PtdEtn) from phosphatidylserine (PtdSer). This is Phosphatidylserine decarboxylase proenzyme from Shewanella denitrificans (strain OS217 / ATCC BAA-1090 / DSM 15013).